The sequence spans 677 residues: Pannexin-2 (677 aa).

The Cytoplasmic segment spans residues 11–47 (MATALLAGEKLRELILPGAQDDKAGALAALLLQLKLE). Residues 48–70 (LPFDRVVTIGTVLVPILLVTLVF) traverse the membrane as a helical segment. Residues 71 to 123 (TKNFAEEPIYCYTPHNFTRDQALYARGYCWTELRDALPGVDASLWPSLFEHKF) are Extracellular-facing. A glycan (N-linked (GlcNAc...) asparagine) is linked at asparagine 86. The helical transmembrane segment at 124 to 146 (LPYALLAFAAIMYVPALGWEFLA) threads the bilayer. The Cytoplasmic portion of the chain corresponds to 147–226 (STRLTSELNF…RGRSNFLAKL (80 aa)). Residues 227–249 (YLARHVLILLLSAVPISYLCTYY) traverse the membrane as a helical segment. Over 250 to 292 (ATQKQNEFTCALGASPDGAAGAGPAVRVSCKLPSVQLQRIIAG) the chain is Extracellular. The helical transmembrane segment at 293-315 (VDIVLLCVMNLIILVNLIHLFIF) threads the bilayer. At 316-643 (RKSNFIFDKL…AREEEDGGPR (328 aa)) the chain is on the cytoplasmic side. Disordered stretches follow at residues 393-423 (ATPTVRDSGVQTVDPSANPAEPDGAAEPPVV) and 454-510 (NSKA…KKHA). The segment covering 492–504 (GPGPAPAPAPPPA) has biased composition (pro residues). Serine 593 carries the phosphoserine modification.

The protein belongs to the pannexin family. In terms of assembly, homoheptameric. S-palmitoylated in neural stem and progenitor cells. Post-translationally, cleaved by CASP3 and CASP7 during apoptosis. Cleavage has no effect on it function.

It localises to the cell membrane. It is found in the golgi apparatus membrane. Its subcellular location is the endoplasmic reticulum membrane. It carries out the reaction ATP(in) = ATP(out). The catalysed reaction is chloride(in) = chloride(out). The enzyme catalyses iodide(out) = iodide(in). It catalyses the reaction Na(+)(in) = Na(+)(out). It carries out the reaction D-gluconate(in) = D-gluconate(out). Ion channel with a slight anion preference. Also able to release ATP. Plays a role in regulating neurogenesis and apoptosis in keratinocytes. The sequence is that of Pannexin-2 from Homo sapiens (Human).